We begin with the raw amino-acid sequence, 502 residues long: Packaging protein 1 (502 aa).

A disordered region spans residues glutamate 99–serine 122. Position 226-233 (glycine 226–serine 233) interacts with ATP. The interval arginine 495–lysine 502 is DNA-binding.

The protein belongs to the adenoviridae packaging protein 1 family. In terms of assembly, homodimer. Part of a genome packaging complex composed of packaging proteins 1, 2 and 3; this complex specifically binds to the packaging sequence on the left end of viral genomic DNA and performs packaging of the viral genome. Interacts with protein 33K.

It localises to the virion. The protein localises to the host nucleus. The protein resides in the host nucleoplasm. It is found in the host nucleolus. In terms of biological role, component of the packaging machinery which encapsidates the viral DNA into preformed capsids and transcriptional activator of the viral major late promoter (MLP). Binds, along with packaging proteins 2 and 3, to the specific packaging sequence on the left end of viral genomic DNA and displays ATPase activity thereby providing the power stroke of the packaging machinery. The activity of packaging protein IVa2 is stimulated by protein 33K which acts as a terminase. May be the protein that pumps DNA into the capsid powered by ATP hydrolysis. Specifically binds to the 5'-CG-3' nucleotides of the repeats making up the packaging sequence. Component of the DEF-A and DEF-B transcription factors that bind downstream elements of the major late promoter (MLP), and stimulate transcription from the MLP after initiation of viral DNA replication. DEF-A is a heterodimer packaging proteins 1 and 2 and DEF-B is a homodimer of packaging protein 1. The protein is Packaging protein 1 of Canis lupus familiaris (Dog).